A 158-amino-acid polypeptide reads, in one-letter code: MTELKLIHIFTDGSCLGNPGPGGYGIVMNYKGHTKEMSDGFALTTNNRMELLAPIVALEALKEPCKVILTSDSQYMRQGITTWIHGWKKKGWMTSNRTPVKNVDLWKRLDKAAQLHHIDWRWVKGHAGHAENERCDQLARAAAEASPTQIDEGYQAES.

The region spanning 3-144 (ELKLIHIFTD…CDQLARAAAE (142 aa)) is the RNase H type-1 domain. Positions 12, 50, 72, and 136 each coordinate Mg(2+).

This sequence belongs to the RNase H family. As to quaternary structure, monomer. The cofactor is Mg(2+).

The protein localises to the cytoplasm. The catalysed reaction is Endonucleolytic cleavage to 5'-phosphomonoester.. In terms of biological role, endonuclease that specifically degrades the RNA of RNA-DNA hybrids. This Shewanella sp. (strain MR-4) protein is Ribonuclease H.